The following is a 479-amino-acid chain: Phosphatidylinositol 4-kinase type 2-beta (479 aa).

The segment covering 1–10 has biased composition (acidic residues); the sequence is MESGSEEPDE. The segment at 1–91 is disordered; that stretch reads MESGSEEPDE…PRVGAGHTGH (91 aa). Over residues 18 to 34 the composition is skewed to low complexity; it reads PALHAGPPAGRAAPGGA. Acidic residues predominate over residues 42-62; the sequence is GLEEEEEGEEDSGPEGDGEEE. The PI3K/PI4K catalytic domain maps to 118–449; the sequence is GVLPERISQG…VQMPRVIVER (332 aa). Residues 124–130 are G-loop; the sequence is ISQGSSG. Positions 131 and 146 each coordinate ATP. The interval 151–153 is important for substrate binding; that stretch reads EPY. Residues 159-172 form an important for interaction with membranes region; sequence KWTKYFHKICCPCC. ATP contacts are provided by residues 255-258 and 269-270; these read QLFV and RK. Positions 262 to 270 are important for interaction with membranes; it reads KEADYWLRK. Residues 299–307 are catalytic loop; it reads RNTDRGNDN. Residues 340-360 form an activation loop region; the sequence is AIDNGLAFPFKHPDEWRAYPF. Residue Asp-342 participates in ATP binding. The important for interaction with membranes stretch occupies residues 355–364; sequence WRAYPFHWAW.

The protein belongs to the PI3/PI4-kinase family. Type II PI4K subfamily.

The protein localises to the cytoplasm. The protein resides in the cytosol. Its subcellular location is the golgi apparatus membrane. It is found in the endoplasmic reticulum membrane. It localises to the cell membrane. The protein localises to the early endosome membrane. It catalyses the reaction a 1,2-diacyl-sn-glycero-3-phospho-(1D-myo-inositol) + ATP = a 1,2-diacyl-sn-glycero-3-phospho-(1D-myo-inositol 4-phosphate) + ADP + H(+). Functionally, contributes to the overall PI4-kinase activity of the cell. This contribution may be especially significant in plasma membrane, endosomal and Golgi compartments. The phosphorylation of phosphatidylinositol (PI) to PI4P is the first committed step in the generation of phosphatidylinositol 4,5-bisphosphate (PIP2), a precursor of the second messenger inositol 1,4,5-trisphosphate (InsP3). This chain is Phosphatidylinositol 4-kinase type 2-beta (PI4K2B), found in Gallus gallus (Chicken).